Consider the following 195-residue polypeptide: Probable GTP-binding protein EngB (195 aa).

An EngB-type G domain is found at 22-195 (GLPEIALAGR…WGAIKKMISR (174 aa)). Residues 30 to 37 (GRSNVGKS), 57 to 61 (GKTQT), 75 to 78 (DVPG), 142 to 145 (TKAD), and 174 to 176 (FSS) each bind GTP. Residues serine 37 and threonine 59 each contribute to the Mg(2+) site.

It belongs to the TRAFAC class TrmE-Era-EngA-EngB-Septin-like GTPase superfamily. EngB GTPase family. Requires Mg(2+) as cofactor.

Necessary for normal cell division and for the maintenance of normal septation. This chain is Probable GTP-binding protein EngB, found in Bacillus velezensis (strain DSM 23117 / BGSC 10A6 / LMG 26770 / FZB42) (Bacillus amyloliquefaciens subsp. plantarum).